A 61-amino-acid polypeptide reads, in one-letter code: Small ribosomal subunit protein uS14 (61 aa).

Residues cysteine 24, cysteine 27, cysteine 40, and cysteine 43 each contribute to the Zn(2+) site.

The protein belongs to the universal ribosomal protein uS14 family. Zinc-binding uS14 subfamily. In terms of assembly, part of the 30S ribosomal subunit. Contacts proteins S3 and S10. It depends on Zn(2+) as a cofactor.

Binds 16S rRNA, required for the assembly of 30S particles and may also be responsible for determining the conformation of the 16S rRNA at the A site. This is Small ribosomal subunit protein uS14 from Anaeromyxobacter dehalogenans (strain 2CP-1 / ATCC BAA-258).